We begin with the raw amino-acid sequence, 86 residues long: Neurotoxin 3FTx-RK (86 aa).

Positions 1–21 are cleaved as a signal peptide; sequence MKTLLLTLVVVTIVCLELGYT. Cystine bridges form between Cys24–Cys45, Cys38–Cys63, Cys67–Cys78, and Cys79–Cys84.

As to expression, expressed by the venom gland.

It localises to the secreted. In Bungarus fasciatus (Banded krait), this protein is Neurotoxin 3FTx-RK.